The chain runs to 172 residues: Adenine phosphoribosyltransferase (172 aa).

This sequence belongs to the purine/pyrimidine phosphoribosyltransferase family. In terms of assembly, homodimer.

It localises to the cytoplasm. The enzyme catalyses AMP + diphosphate = 5-phospho-alpha-D-ribose 1-diphosphate + adenine. It functions in the pathway purine metabolism; AMP biosynthesis via salvage pathway; AMP from adenine: step 1/1. In terms of biological role, catalyzes a salvage reaction resulting in the formation of AMP, that is energically less costly than de novo synthesis. This chain is Adenine phosphoribosyltransferase, found in Staphylococcus carnosus (strain TM300).